Consider the following 354-residue polypeptide: Non-structural protein NS2 (354 aa).

Disordered regions lie at residues Asn-163–Ala-196 and Asp-229–Thr-269. 2 stretches are compositionally biased toward basic and acidic residues: residues Ser-178–Ala-196 and Asp-237–Ser-249. Acidic residues predominate over residues Asp-250–Asp-260.

Single-stranded RNA-binding protein. The polypeptide is Non-structural protein NS2 (Segment-8) (Bluetongue virus 17 (isolate USA) (BTV 17)).